The sequence spans 486 residues: Cysteine--tRNA ligase (486 aa).

C29 provides a ligand contact to Zn(2+). Residues 31 to 41 (VTVYDYCHLGH) carry the 'HIGH' region motif. C214, H239, and E243 together coordinate Zn(2+). The short motif at 271-275 (KMSKS) is the 'KMSKS' region element. K274 is a binding site for ATP.

The protein belongs to the class-I aminoacyl-tRNA synthetase family. Monomer. Requires Zn(2+) as cofactor.

The protein localises to the cytoplasm. It carries out the reaction tRNA(Cys) + L-cysteine + ATP = L-cysteinyl-tRNA(Cys) + AMP + diphosphate. This Trichormus variabilis (strain ATCC 29413 / PCC 7937) (Anabaena variabilis) protein is Cysteine--tRNA ligase.